Consider the following 283-residue polypeptide: MSAKIMDGKSIAQQIKNEVAHGVQKRLKQGKRAPGLAVILIGENSASQIYVANKRKACEEVGFVSHCYPLPETTSKAELVSLIKQLNQDPEIDGILVQLPLPERFDSANMLEQIRPDKDVDGFHPYNIGSLCQRIPKLRPCTPLGIMTLLARYDLDPCGLNALVVGASNIVGRPMSLELLLAGCTTTVAHRFTQHLQQHVENADLLVVAVGKPSFIPGTWIKPGAIVIDVGINRLQNGRVVGDVEFDMAATRAAWITPVPGGVGPMTVASLLQNTLKACMERT.

NADP(+)-binding positions include 166-168 (GAS) and Ile232.

It belongs to the tetrahydrofolate dehydrogenase/cyclohydrolase family. Homodimer.

The catalysed reaction is (6R)-5,10-methylene-5,6,7,8-tetrahydrofolate + NADP(+) = (6R)-5,10-methenyltetrahydrofolate + NADPH. It carries out the reaction (6R)-5,10-methenyltetrahydrofolate + H2O = (6R)-10-formyltetrahydrofolate + H(+). The protein operates within one-carbon metabolism; tetrahydrofolate interconversion. Its function is as follows. Catalyzes the oxidation of 5,10-methylenetetrahydrofolate to 5,10-methenyltetrahydrofolate and then the hydrolysis of 5,10-methenyltetrahydrofolate to 10-formyltetrahydrofolate. This chain is Bifunctional protein FolD, found in Hamiltonella defensa subsp. Acyrthosiphon pisum (strain 5AT).